A 186-amino-acid chain; its full sequence is uncharacterized protein (186 aa).

The signal sequence occupies residues 1–18 (MNKFLFAAALIVSGLLVG). A lipid anchor (N-palmitoyl cysteine) is attached at C19. A lipid anchor (S-diacylglycerol cysteine) is attached at C19.

It localises to the cell membrane. This is an uncharacterized protein from Escherichia coli (strain K12).